A 309-amino-acid polypeptide reads, in one-letter code: Taste receptor type 2 member 113 (309 aa).

At 1–8 (MVAVLQST) the chain is on the extracellular side. A helical transmembrane segment spans residues 9–29 (FAIIFSMEFIVGTLGNGFIIL). Residues 30 to 55 (MTCIDWVRRRKISLVDQILTALAITR) are Cytoplasmic-facing. The helical transmembrane segment at 56 to 76 (ITLILLVFIDWWVSVLFPALH) threads the bilayer. Residues 77-101 (ETGKILRMYFISWTVINHCNLWLTA) lie on the Extracellular side of the membrane. Residues 102–122 (SLSIIYFLKIASFSSIIFLYL) traverse the membrane as a helical segment. The Cytoplasmic segment spans residues 123–127 (KFRVK). A helical transmembrane segment spans residues 128–148 (NVVFVTLLVSLFFLFINTAIV). The Extracellular portion of the chain corresponds to 149 to 185 (NVYFDVCFDGVQRNVSQVSRLYNHEQICKFLSFTNPM). Asn-162 carries an N-linked (GlcNAc...) asparagine glycan. A helical transmembrane segment spans residues 186–206 (FAFIPFVTSMATFFLLIFSLW). At 207 to 229 (RHLKNMKHNAEGCRDVSTIVHIR) the chain is on the cytoplasmic side. The helical transmembrane segment at 230–250 (ALQTIIVSVVLYSTFFLSFFV) threads the bilayer. Topologically, residues 251–262 (KVWSSGSPERYL) are extracellular. Residues 263–283 (IFLFVWALGNAVLPAHTFVLI) traverse the membrane as a helical segment. At 284–309 (WGNCRLRWASLSLMLWLRYRFKNIDV) the chain is on the cytoplasmic side.

Belongs to the G-protein coupled receptor T2R family.

The protein resides in the membrane. Functionally, putative taste receptor which may play a role in the perception of bitterness. The polypeptide is Taste receptor type 2 member 113 (Rattus norvegicus (Rat)).